The primary structure comprises 217 residues: Germin-like protein subfamily 1 member 1 (217 aa).

Positions 1-18 (MILNILLTLTLLMGRVKS) are cleaved as a signal peptide. A disulfide bridge connects residues C27 and C45. The region spanning 59–209 (SALSRPGNTK…AYDINGQDVA (151 aa)) is the Cupin type-1 domain. The N-linked (GlcNAc...) asparagine glycan is linked to N75. Residues H108, H110, E115, and H154 each contribute to the Mn(2+) site.

The protein belongs to the germin family. In terms of assembly, oligomer (believed to be a pentamer but probably hexamer).

It localises to the secreted. The protein resides in the extracellular space. The protein localises to the apoplast. Functionally, may play a role in plant defense. Probably has no oxalate oxidase activity even if the active site is conserved. This Arabidopsis thaliana (Mouse-ear cress) protein is Germin-like protein subfamily 1 member 1 (GLP7).